The chain runs to 726 residues: Bromodomain-containing protein 3 (726 aa).

Residues 1 to 35 are disordered; sequence MSTATTVAPAGIPATPGPVNPPPPEVSNPSKPGRK. Residue Ser-2 is modified to N-acetylserine. Positions 15–26 are enriched in pro residues; it reads TPGPVNPPPPEV. Positions 34–140 constitute a Bromo 1 domain; sequence RKTNQLQYMQ…KIFLQKVAQM (107 aa). Residues 78 to 80 form an acetylated histone H3 binding region; it reads KNP. Disordered regions lie at residues 149–169 and 237–305; these read PPAPKGKGRKPAAGAQSAGTQ and VKKK…AGKK. Residues 248 to 261 show a composition bias toward low complexity; sequence TTTPTTSAITASRS. A phosphoserine mark is found at Ser-263 and Ser-281. The 110-residue stretch at 306-415 folds into the Bromo 2 domain; the sequence is GKLSEHLRYC…DVFEMRFAKM (110 aa). A Glycyl lysine isopeptide (Lys-Gly) (interchain with G-Cter in SUMO2) cross-link involves residue Lys-414. Disordered stretches follow at residues 421–462, 477–575, and 637–726; these read EAPA…RATR, LAAL…MSYD, and LQKK…SDSE. Residues 453–524 adopt a coiled-coil conformation; the sequence is SDSEEERATR…AEEEKKAKVA (72 aa). Over residues 487-503 the composition is skewed to basic residues; it reads KPKKKKEKKEKEKKKKD. Basic and acidic residues predominate over residues 504–521; it reads KEKEKEKHKVKAEEEKKA. Residues 523–540 are compositionally biased toward low complexity; the sequence is VAPPAKQAQQKKAPAKKA. The 83-residue stretch at 562–644 folds into the NET domain; the sequence is DSEEEEEGLP…SCLQKKQRKP (83 aa). Ser-563 carries the phosphoserine modification. A coiled-coil region spans residues 645–684; it reads FSASGKKQAAKSKEELAQEKKKELEKRLQDVSGQLSSSKK. The segment covering 655-673 has biased composition (basic and acidic residues); that stretch reads KSKEELAQEKKKELEKRLQ. The span at 692 to 726 shows a compositional bias: low complexity; the sequence is GSAPSGGPSRLSSSSSSESGSSSSSGSSSDSSDSE.

Belongs to the BET family. As to quaternary structure, interacts (via bromo domain 1) with GATA1 acetylated at 'Lys-312' and 'Lys-315'. Interacts (via bromo domain 1) with GATA2 acetylated on lysine residues. Interacts (via NET domain) with CHD4 (via KIKL motif). Interacts (via NET domain) with SMARCA4 (via KIKL motif). Interacts (via NET domain) with NSD3 (via KIKL motif). In terms of assembly, (Microbial infection) Interacts with the Integrase protein of Moloney murine leukemia virus (MLV). In terms of tissue distribution, ubiquitous.

It localises to the nucleus. Its subcellular location is the chromosome. Its activity is regulated as follows. Inhibited by JQ1, a thieno-triazolo-1,4-diazepine derivative, which specifically inhibits members of the BET family (BRD2, BRD3 and BRD4). The first bromo domain is inhibited by GSK778 (iBET-BD1), which specifically inhibits the first bromo domain of members of the BET family (BRD2, BRD3 and BRD4). The second bromo domain is inhibited by ABBV-744, which specifically inhibits the second bromo domain of members of the BET family (BRD2, BRD3 and BRD4). The second bromo domain is inhibited by GSK046 (iBET-BD2), which specifically inhibits the second bromo domain of members of the BET family (BRD2, BRD3 and BRD4). Its function is as follows. Chromatin reader that recognizes and binds acetylated histones, thereby controlling gene expression and remodeling chromatin structures. Recruits transcription factors and coactivators to target gene sites, and activates RNA polymerase II machinery for transcriptional elongation. In vitro, binds acetylated lysine residues on the N-terminus of histone H2A, H2B, H3 and H4. Involved in endoderm differentiation via its association with long non-coding RNA (lncRNA) DIGIT: BRD3 undergoes liquid-liquid phase separation upon binding to lncRNA DIGIT, promoting binding to histone H3 acetylated at 'Lys-18' (H3K18ac) to induce endoderm gene expression. Also binds non-histones acetylated proteins, such as GATA1 and GATA2: regulates transcription by promoting the binding of the transcription factor GATA1 to its targets. The chain is Bromodomain-containing protein 3 from Homo sapiens (Human).